The chain runs to 493 residues: Voltage-gated potassium channel regulatory subunit KCNF1 (493 aa).

At Met-1–Val-183 the chain is on the cytoplasmic side. A helical membrane pass occupies residues Val-184–Ile-204. A helical membrane pass occupies residues Asn-224–Ser-244. Residues Pro-245–His-249 are Cytoplasmic-facing. A helical transmembrane segment spans residues Phe-250–Leu-270. Residues Gln-290–Leu-310 traverse the membrane as a helical; Voltage-sensor segment. The Cytoplasmic portion of the chain corresponds to Gln-311–Leu-324. The helical transmembrane segment at Gly-325–Met-345 threads the bilayer. Positions Pro-358–Pro-378 form an intramembrane region, pore-forming. The Selectivity filter motif lies at Thr-370–Asp-375. A helical transmembrane segment spans residues Asn-386–Ile-406. At Asn-407–Lys-493 the chain is on the cytoplasmic side. Residues Ser-434–Lys-468 form a disordered region.

This sequence belongs to the potassium channel family. F (TC 1.A.1.2) subfamily. Kv5.1/KCNF1 sub-subfamily. Heterotetramer with KCNB1 or KCNB2.

The protein resides in the cell membrane. Regulatory alpha-subunit of the voltage-gated potassium (Kv) channel which, when coassembled with KCNB1 or KCNB2, can modulate their expression and their gating kinetics by acting on deactivation upon repolarization and inactivation during maintained depolarization. Accelerates inactivation but has relatively little effect on deactivation. Coexpression with KCNB1 or KCNB2 markedly slows inactivation. Each modulatory subunit has its own specific properties of regulation, and can lead to extensive inhibitions, to large changes in kinetics, and/or to large shifts in the voltage dependencies of the inactivation process. The gating kinetics depends on the nature and stoichiometry of the associated regulatory sunbunit. Fails to produce a potassium current when expressed alone. The sequence is that of Voltage-gated potassium channel regulatory subunit KCNF1 from Mus musculus (Mouse).